The chain runs to 294 residues: 4-hydroxy-tetrahydrodipicolinate synthase (294 aa).

Position 44 (Thr44) interacts with pyruvate. Tyr132 (proton donor/acceptor) is an active-site residue. Residue Lys161 is the Schiff-base intermediate with substrate of the active site. Residue Ile206 coordinates pyruvate.

It belongs to the DapA family. As to quaternary structure, homotetramer; dimer of dimers.

It localises to the cytoplasm. It carries out the reaction L-aspartate 4-semialdehyde + pyruvate = (2S,4S)-4-hydroxy-2,3,4,5-tetrahydrodipicolinate + H2O + H(+). The protein operates within amino-acid biosynthesis; L-lysine biosynthesis via DAP pathway; (S)-tetrahydrodipicolinate from L-aspartate: step 3/4. With respect to regulation, is not inhibited by (S)-lysine, in contrast to E.coli DapA. Its function is as follows. Catalyzes the condensation of (S)-aspartate-beta-semialdehyde [(S)-ASA] and pyruvate to 4-hydroxy-tetrahydrodipicolinate (HTPA). This Thermotoga maritima (strain ATCC 43589 / DSM 3109 / JCM 10099 / NBRC 100826 / MSB8) protein is 4-hydroxy-tetrahydrodipicolinate synthase.